A 157-amino-acid chain; its full sequence is S-ribosylhomocysteine lyase 2 (157 aa).

Residues His54, His58, and Cys124 each coordinate Fe cation.

It belongs to the LuxS family. Homodimer. The cofactor is Fe cation.

It catalyses the reaction S-(5-deoxy-D-ribos-5-yl)-L-homocysteine = (S)-4,5-dihydroxypentane-2,3-dione + L-homocysteine. Its function is as follows. Involved in the synthesis of autoinducer 2 (AI-2) which is secreted by bacteria and is used to communicate both the cell density and the metabolic potential of the environment. The regulation of gene expression in response to changes in cell density is called quorum sensing. Catalyzes the transformation of S-ribosylhomocysteine (RHC) to homocysteine (HC) and 4,5-dihydroxy-2,3-pentadione (DPD). This chain is S-ribosylhomocysteine lyase 2, found in Lactobacillus delbrueckii subsp. bulgaricus (strain ATCC BAA-365 / Lb-18).